We begin with the raw amino-acid sequence, 85 residues long: Large ribosomal subunit protein bL27 (85 aa).

Positions methionine 1–arginine 20 are disordered.

This sequence belongs to the bacterial ribosomal protein bL27 family.

This chain is Large ribosomal subunit protein bL27, found in Cronobacter sakazakii (strain ATCC BAA-894) (Enterobacter sakazakii).